Reading from the N-terminus, the 289-residue chain is ATP phosphoribosyltransferase (289 aa).

The protein belongs to the ATP phosphoribosyltransferase family. Long subfamily. The cofactor is Mg(2+).

The protein resides in the cytoplasm. It carries out the reaction 1-(5-phospho-beta-D-ribosyl)-ATP + diphosphate = 5-phospho-alpha-D-ribose 1-diphosphate + ATP. The protein operates within amino-acid biosynthesis; L-histidine biosynthesis; L-histidine from 5-phospho-alpha-D-ribose 1-diphosphate: step 1/9. Feedback inhibited by histidine. Functionally, catalyzes the condensation of ATP and 5-phosphoribose 1-diphosphate to form N'-(5'-phosphoribosyl)-ATP (PR-ATP). Has a crucial role in the pathway because the rate of histidine biosynthesis seems to be controlled primarily by regulation of HisG enzymatic activity. This Methanosarcina acetivorans (strain ATCC 35395 / DSM 2834 / JCM 12185 / C2A) protein is ATP phosphoribosyltransferase.